The primary structure comprises 311 residues: Sensor histidine kinase YcbM (311 aa).

The helical transmembrane segment at 1-21 threads the bilayer; it reads MTVLWVAAVIALACLNVIQFI. The Cytoplasmic segment spans residues 22-311; the sequence is MKKKRDGNLA…FTITLKRMTY (290 aa). The Histidine kinase domain occupies 92 to 310; that stretch reads NMSHDLKTPL…AFTITLKRMT (219 aa). At H95 the chain carries Phosphohistidine; by autocatalysis.

The protein resides in the cell membrane. It catalyses the reaction ATP + protein L-histidine = ADP + protein N-phospho-L-histidine.. Functionally, member of the two-component regulatory system YcbM/YcbL. Probably activates YcbL by phosphorylation. The polypeptide is Sensor histidine kinase YcbM (ycbM) (Bacillus subtilis (strain 168)).